The chain runs to 483 residues: Glutamate--tRNA ligase (483 aa).

The short motif at 14–24 (PSPTGDPHVGT) is the 'HIGH' region element. A 'KMSKS' region motif is present at residues 253 to 257 (KISKR). Position 256 (K256) interacts with ATP.

The protein belongs to the class-I aminoacyl-tRNA synthetase family. Glutamate--tRNA ligase type 1 subfamily. Monomer.

The protein localises to the cytoplasm. The catalysed reaction is tRNA(Glu) + L-glutamate + ATP = L-glutamyl-tRNA(Glu) + AMP + diphosphate. In terms of biological role, catalyzes the attachment of glutamate to tRNA(Glu) in a two-step reaction: glutamate is first activated by ATP to form Glu-AMP and then transferred to the acceptor end of tRNA(Glu). This Deinococcus radiodurans (strain ATCC 13939 / DSM 20539 / JCM 16871 / CCUG 27074 / LMG 4051 / NBRC 15346 / NCIMB 9279 / VKM B-1422 / R1) protein is Glutamate--tRNA ligase.